The chain runs to 136 residues: ATP synthase F(0) complex subunit C1, mitochondrial (136 aa).

The N-terminal 61 residues, 1-61 (MQTAGALFIS…REFQTSVVSR (61 aa)), are a transit peptide targeting the mitochondrion. The helical transmembrane segment at 77–97 (VGVAGSGAGIGTVFGSLIIGY) threads the bilayer. At lysine 104 the chain carries N6,N6,N6-trimethyllysine. Residues 112–132 (ILGFALSEAMGLFCLMVAFLI) form a helical membrane-spanning segment.

This sequence belongs to the ATPase C chain family. In terms of assembly, homooctamer; the c-ring consists of eight c subunits forming a circle, and each subunit adopts a hairpin shape. Component of the ATP synthase complex composed at least of ATP5F1A/subunit alpha, ATP5F1B/subunit beta, ATP5MC1/subunit c (homooctomer), MT-ATP6/subunit a, MT-ATP8/subunit 8, ATP5ME/subunit e, ATP5MF/subunit f, ATP5MG/subunit g, ATP5MK/subunit k, ATP5MJ/subunit j, ATP5F1C/subunit gamma, ATP5F1D/subunit delta, ATP5F1E/subunit epsilon, ATP5PF/subunit F6, ATP5PB/subunit b, ATP5PD/subunit d, ATP5PO/subunit OSCP. ATP synthase complex consists of a soluble F(1) head domain (subunits alpha(3) and beta(3)) - the catalytic core - and a membrane F(0) domain - the membrane proton channel (subunits c, a, 8, e, f, g, k and j). These two domains are linked by a central stalk (subunits gamma, delta, and epsilon) rotating inside the F1 region and a stationary peripheral stalk (subunits F6, b, d, and OSCP). Interacts with TMEM70 (homooligomer form); this interaction facilitates the oligomer formation of subunit c/ATP5MC1 (c-ring) and the c-ring membrane insertion and also protects ATP5MC1 against intramitochondrial proteolysis. Post-translationally, trimethylated by ATPSCKMT at Lys-104. Methylation is required for proper incorporation of the C subunit into the ATP synthase complex and mitochondrial respiration.

The protein localises to the mitochondrion membrane. The enzyme catalyses H(+)(in) = H(+)(out). Its function is as follows. Subunit c, of the mitochondrial membrane ATP synthase complex (F(1)F(0) ATP synthase or Complex V) that produces ATP from ADP in the presence of a proton gradient across the membrane which is generated by electron transport complexes of the respiratory chain. ATP synthase complex consist of a soluble F(1) head domain - the catalytic core - and a membrane F(1) domain - the membrane proton channel. These two domains are linked by a central stalk rotating inside the F(1) region and a stationary peripheral stalk. During catalysis, ATP synthesis in the catalytic domain of F(1) is coupled via a rotary mechanism of the central stalk subunits to proton translocation. With the subunit a (MT-ATP6), forms the proton-conducting channel in the F(0) domain, that contains two crucial half-channels (inlet and outlet) that facilitate proton movement from the mitochondrial intermembrane space (IMS) into the matrix. Protons are taken up via the inlet half-channel and released through the outlet half-channel, following a Grotthuss mechanism. The chain is ATP synthase F(0) complex subunit C1, mitochondrial from Homo sapiens (Human).